A 447-amino-acid chain; its full sequence is Argininosuccinate synthase (447 aa).

Residues 20–28 (AFSGGLDTS) and A46 each bind ATP. Y102 is a binding site for L-citrulline. Residues G132 and T134 each contribute to the ATP site. Positions 134, 138, and 139 each coordinate L-aspartate. N138 contacts L-citrulline. D139 lines the ATP pocket. Residues R142 and S195 each contribute to the L-citrulline site. An ATP-binding site is contributed by D197. T204, E206, and E283 together coordinate L-citrulline.

Belongs to the argininosuccinate synthase family. Type 2 subfamily. In terms of assembly, homotetramer.

It is found in the cytoplasm. The catalysed reaction is L-citrulline + L-aspartate + ATP = 2-(N(omega)-L-arginino)succinate + AMP + diphosphate + H(+). Its pathway is amino-acid biosynthesis; L-arginine biosynthesis; L-arginine from L-ornithine and carbamoyl phosphate: step 2/3. The protein is Argininosuccinate synthase of Neisseria gonorrhoeae (strain ATCC 700825 / FA 1090).